The primary structure comprises 369 residues: uncharacterized protein (369 aa).

N6-(pyridoxal phosphate)lysine is present on Lys184.

It belongs to the class-V pyridoxal-phosphate-dependent aminotransferase family. The cofactor is pyridoxal 5'-phosphate.

This is an uncharacterized protein from Helicobacter pylori (strain ATCC 700392 / 26695) (Campylobacter pylori).